The primary structure comprises 634 residues: DNA-directed RNA polymerase subunit gamma (634 aa).

Zn(2+) contacts are provided by cysteine 74, cysteine 76, cysteine 89, and cysteine 92. Mg(2+) contacts are provided by aspartate 471, aspartate 473, and aspartate 475.

Belongs to the RNA polymerase beta' chain family. RpoC1 subfamily. In cyanobacteria the RNAP catalytic core is composed of 2 alpha, 1 beta, 1 beta', 1 gamma and 1 omega subunit. When a sigma factor is associated with the core the holoenzyme is formed, which can initiate transcription. Requires Mg(2+) as cofactor. Zn(2+) serves as cofactor.

It catalyses the reaction RNA(n) + a ribonucleoside 5'-triphosphate = RNA(n+1) + diphosphate. Functionally, DNA-dependent RNA polymerase catalyzes the transcription of DNA into RNA using the four ribonucleoside triphosphates as substrates. The polypeptide is DNA-directed RNA polymerase subunit gamma (Synechococcus sp. (strain CC9605)).